Reading from the N-terminus, the 120-residue chain is Large ribosomal subunit protein eL18 (120 aa).

It belongs to the eukaryotic ribosomal protein eL18 family.

This chain is Large ribosomal subunit protein eL18, found in Pyrococcus abyssi (strain GE5 / Orsay).